The sequence spans 151 residues: Acidic phospholipase A2 4 (151 aa).

Positions 1–27 are cleaved as a signal peptide; that stretch reads MYPAHLLVLLAVCVSLLGAASIPARPL. Cystine bridges form between C38-C104, C54-C151, C56-C72, C71-C132, C78-C125, C88-C118, and C111-C123. 3 residues coordinate Ca(2+): Y55, G57, and G59. Residue H75 is part of the active site. Residue D76 coordinates Ca(2+). D126 is an active-site residue.

This sequence belongs to the phospholipase A2 family. Group I subfamily. D49 sub-subfamily. The cofactor is Ca(2+). Expressed by the venom gland.

The protein localises to the secreted. The catalysed reaction is a 1,2-diacyl-sn-glycero-3-phosphocholine + H2O = a 1-acyl-sn-glycero-3-phosphocholine + a fatty acid + H(+). PLA2 catalyzes the calcium-dependent hydrolysis of the 2-acyl groups in 3-sn-phosphoglycerides. This is Acidic phospholipase A2 4 from Tropidechis carinatus (Australian rough-scaled snake).